Consider the following 409-residue polypeptide: S-adenosylmethionine synthase (409 aa).

His15 contributes to the ATP binding site. Asp17 is a Mg(2+) binding site. A K(+)-binding site is contributed by Glu43. Residues Glu56 and Gln100 each contribute to the L-methionine site. A flexible loop region spans residues 100 to 110; sequence QSSDIAQGVNE. Residues 171–173, 248–249, Asp257, 263–264, Ala280, and Lys284 each bind ATP; these read DGK, KF, and RK. Residue Asp257 participates in L-methionine binding. Lys288 contributes to the L-methionine binding site.

The protein belongs to the AdoMet synthase family. As to quaternary structure, homotetramer; dimer of dimers. It depends on Mg(2+) as a cofactor. The cofactor is K(+).

The protein resides in the cytoplasm. It carries out the reaction L-methionine + ATP + H2O = S-adenosyl-L-methionine + phosphate + diphosphate. The protein operates within amino-acid biosynthesis; S-adenosyl-L-methionine biosynthesis; S-adenosyl-L-methionine from L-methionine: step 1/1. Catalyzes the formation of S-adenosylmethionine (AdoMet) from methionine and ATP. The overall synthetic reaction is composed of two sequential steps, AdoMet formation and the subsequent tripolyphosphate hydrolysis which occurs prior to release of AdoMet from the enzyme. This chain is S-adenosylmethionine synthase, found in Prochlorococcus marinus (strain NATL2A).